A 139-amino-acid polypeptide reads, in one-letter code: Nucleoside diphosphate kinase (139 aa).

Positions 10, 58, 86, 92, 103, and 113 each coordinate ATP. H116 functions as the Pros-phosphohistidine intermediate in the catalytic mechanism.

The protein belongs to the NDK family. Homotetramer. The cofactor is Mg(2+).

Its subcellular location is the cytoplasm. It carries out the reaction a 2'-deoxyribonucleoside 5'-diphosphate + ATP = a 2'-deoxyribonucleoside 5'-triphosphate + ADP. It catalyses the reaction a ribonucleoside 5'-diphosphate + ATP = a ribonucleoside 5'-triphosphate + ADP. In terms of biological role, major role in the synthesis of nucleoside triphosphates other than ATP. The ATP gamma phosphate is transferred to the NDP beta phosphate via a ping-pong mechanism, using a phosphorylated active-site intermediate. The protein is Nucleoside diphosphate kinase of Nitratidesulfovibrio vulgaris (strain ATCC 29579 / DSM 644 / CCUG 34227 / NCIMB 8303 / VKM B-1760 / Hildenborough) (Desulfovibrio vulgaris).